A 49-amino-acid polypeptide reads, in one-letter code: Large ribosomal subunit protein bL33A (49 aa).

Belongs to the bacterial ribosomal protein bL33 family.

The protein is Large ribosomal subunit protein bL33A of Streptococcus pneumoniae (strain Hungary19A-6).